The primary structure comprises 62 residues: MTIAFQLAVFALIATSLILVIGVPVVFASPDGWSSNKNIVFSGTSLWIGLVFLVGILNSLIS.

2 helical membrane passes run 8 to 28 and 41 to 61; these read AVFALIATSLILVIGVPVVFA and FSGTSLWIGLVFLVGILNSLI.

It belongs to the PsbZ family. In terms of assembly, PSII is composed of 1 copy each of membrane proteins PsbA, PsbB, PsbC, PsbD, PsbE, PsbF, PsbH, PsbI, PsbJ, PsbK, PsbL, PsbM, PsbT, PsbY, PsbZ, Psb30/Ycf12, at least 3 peripheral proteins of the oxygen-evolving complex and a large number of cofactors. It forms dimeric complexes.

The protein resides in the plastid. It localises to the chloroplast thylakoid membrane. In terms of biological role, may control the interaction of photosystem II (PSII) cores with the light-harvesting antenna, regulates electron flow through the 2 photosystem reaction centers. PSII is a light-driven water plastoquinone oxidoreductase, using light energy to abstract electrons from H(2)O, generating a proton gradient subsequently used for ATP formation. The chain is Photosystem II reaction center protein Z from Piper cenocladum (Ant piper).